A 423-amino-acid polypeptide reads, in one-letter code: Probable sucrose-phosphatase 3b (423 aa).

This sequence belongs to the sucrose phosphatase family. As to quaternary structure, homodimer. Requires Mg(2+) as cofactor.

The catalysed reaction is sucrose 6(F)-phosphate + H2O = sucrose + phosphate. It functions in the pathway glycan biosynthesis; sucrose biosynthesis; sucrose from D-fructose 6-phosphate and UDP-alpha-D-glucose: step 2/2. Its function is as follows. Catalyzes the final step of sucrose synthesis. The protein is Probable sucrose-phosphatase 3b (SPP3B) of Arabidopsis thaliana (Mouse-ear cress).